The sequence spans 259 residues: MVKYAGLLQFKGTNYAGFQRQKNGTAIQNVLESTLSQINNRATVVRYSGRTDAGVHAWGMPFVFWGREDLSADKWMFILNRMLPKDMRVISVVRTSPEFDPQLSAVAKQYLYCATQERLGPLWDDFFAYLPNLSIETSAVISAARKLVGEHDFKGFSKKGSSVKSTRRKLYEVSVMFTHSRMYFSFVGNGFLYGMVRLMVGTLLQIGWGKQDVNFIDEVLSGNAVANYSAPAQGLHLVKVWLEPDPFLESVKANERDFS.

The Nucleophile role is filled by aspartate 52. Tyrosine 110 provides a ligand contact to substrate.

Belongs to the tRNA pseudouridine synthase TruA family. Homodimer.

The catalysed reaction is uridine(38/39/40) in tRNA = pseudouridine(38/39/40) in tRNA. Functionally, formation of pseudouridine at positions 38, 39 and 40 in the anticodon stem and loop of transfer RNAs. The chain is tRNA pseudouridine synthase A from Coprothermobacter proteolyticus (strain ATCC 35245 / DSM 5265 / OCM 4 / BT).